A 589-amino-acid polypeptide reads, in one-letter code: ATP-dependent lipid A-core flippase (589 aa).

Helical transmembrane passes span 29–49, 70–90, 157–177, 261–281, and 283–303; these read LLLVAALIAALIEAAGTTGFL, WLPVQIILLFVVRGVAGYITD, VIGALALMLWHSWQVTLTILV, MIGAIGLSALLFVAGAQALAG, and LTAGDFVVLMTSMLTIIPGLK. An ABC transmembrane type-1 domain is found at 32-314; it reads VAALIAALIE…LTNVQNMVQR (283 aa). One can recognise an ABC transporter domain in the interval 346 to 582; that stretch reads IEFRDVTARY…GGLYSHLHGM (237 aa). 380–387 lines the ATP pocket; sequence GRSGSGKS.

The protein belongs to the ABC transporter superfamily. Lipid exporter (TC 3.A.1.106) family. Homodimer.

It is found in the cell inner membrane. It catalyses the reaction ATP + H2O + lipid A-core oligosaccharideSide 1 = ADP + phosphate + lipid A-core oligosaccharideSide 2.. Involved in lipopolysaccharide (LPS) biosynthesis. Translocates lipid A-core from the inner to the outer leaflet of the inner membrane. Transmembrane domains (TMD) form a pore in the inner membrane and the ATP-binding domain (NBD) is responsible for energy generation. The protein is ATP-dependent lipid A-core flippase of Xanthomonas axonopodis pv. citri (strain 306).